A 240-amino-acid chain; its full sequence is Biosynthetic peptidoglycan transglycosylase (240 aa).

Residues 12–31 (ALLWFAGGSVLLVLVFRFVP) traverse the membrane as a helical segment.

The protein belongs to the glycosyltransferase 51 family.

The protein localises to the cell inner membrane. It catalyses the reaction [GlcNAc-(1-&gt;4)-Mur2Ac(oyl-L-Ala-gamma-D-Glu-L-Lys-D-Ala-D-Ala)](n)-di-trans,octa-cis-undecaprenyl diphosphate + beta-D-GlcNAc-(1-&gt;4)-Mur2Ac(oyl-L-Ala-gamma-D-Glu-L-Lys-D-Ala-D-Ala)-di-trans,octa-cis-undecaprenyl diphosphate = [GlcNAc-(1-&gt;4)-Mur2Ac(oyl-L-Ala-gamma-D-Glu-L-Lys-D-Ala-D-Ala)](n+1)-di-trans,octa-cis-undecaprenyl diphosphate + di-trans,octa-cis-undecaprenyl diphosphate + H(+). It participates in cell wall biogenesis; peptidoglycan biosynthesis. Functionally, peptidoglycan polymerase that catalyzes glycan chain elongation from lipid-linked precursors. This is Biosynthetic peptidoglycan transglycosylase from Pseudomonas fluorescens (strain Pf0-1).